The following is a 337-amino-acid chain: Autophagy-related protein 14 (337 aa).

The segment at 5–20 is cysteine repeats; that stretch reads CSVCRNHVQSMYCAHC. Positions 87-153 form a coiled coil; that stretch reads KRNNRVRYRI…NEVVKREQEL (67 aa).

It belongs to the ATG14 family.

Its subcellular location is the preautophagosomal structure membrane. The protein localises to the vacuole membrane. Functionally, required for cytoplasm to vacuole transport (Cvt) and autophagy as a part of the autophagy-specific VPS34 PI3-kinase complex I. This complex is essential to recruit the ATG8-phosphatidylinositol conjugate and the ATG12-ATG5 conjugate to the pre-autophagosomal structure. ATG14 mediates the specific binding of the VPS34 PI3-kinase complex I to the preautophagosomal structure (PAS). In Vanderwaltozyma polyspora (strain ATCC 22028 / DSM 70294 / BCRC 21397 / CBS 2163 / NBRC 10782 / NRRL Y-8283 / UCD 57-17) (Kluyveromyces polysporus), this protein is Autophagy-related protein 14 (ATG14).